Consider the following 290-residue polypeptide: Triplex capsid protein 1 (290 aa).

The protein belongs to the herpesviridae TRX1 protein family. In terms of assembly, interacts with TRX2, MCP and capsid vertex component 2/CVC2.

It is found in the virion. The protein resides in the host nucleus. Its function is as follows. Structural component of the T=16 icosahedral capsid. The capsid is composed of pentamers and hexamers of major capsid protein/MCP, which are linked together by heterotrimers called triplexes. These triplexes are formed by a single molecule of triplex protein 1/TRX1 and two copies of triplex protein 2/TRX2. Additionally, TRX1 is required for efficient transport of TRX2 to the nucleus, which is the site of capsid assembly. The sequence is that of Triplex capsid protein 1 from Human cytomegalovirus (strain AD169) (HHV-5).